The primary structure comprises 74 residues: Protein SlyX homolog (74 aa).

This sequence belongs to the SlyX family.

This is Protein SlyX homolog from Aliivibrio salmonicida (strain LFI1238) (Vibrio salmonicida (strain LFI1238)).